We begin with the raw amino-acid sequence, 297 residues long: Acetaldehyde dehydrogenase (297 aa).

15 to 18 (SGSI) is an NAD(+) binding site. Residue Cys130 is the Acyl-thioester intermediate of the active site. Residues 162-170 (SAGIATREN) and Asn272 each bind NAD(+).

This sequence belongs to the acetaldehyde dehydrogenase family.

The enzyme catalyses acetaldehyde + NAD(+) + CoA = acetyl-CoA + NADH + H(+). The polypeptide is Acetaldehyde dehydrogenase (mhpF) (Burkholderia thailandensis (strain ATCC 700388 / DSM 13276 / CCUG 48851 / CIP 106301 / E264)).